Consider the following 602-residue polypeptide: MNSWFLQVSKRLGPAGRRLWLLGFMGVVLAVTLGLALRAARESATQRTATYTELLQIAQAGQATAVEVSGDRFLVRQAGGAVVTAVVDEPTLRQELVSRFAGAGASVDFASREDPSRAASAVLPVVVLAAVGFALFTVSRRRSPKVFSDVKAGAARAAVRFADVAGMHEVKQELAETVEFLKSPDRFARLGGRPPRGVLLTGEPGTGKTLLARAVACEAGVRFLSASGSSFQEMFVGVGASRVRALFAEARKSAPCIVFIDEIDAVGRARAKGHGDSASAEHDQTLNQLLVEMDGFDHETGIVVIASTNRADMLDPALLRPGRFDRKVTVPLPDVRGREEILNVHAGPIPLQGEVDLSYIARGTPGFSGADLANLLNEAAILAAREGADAVDPTHIDRARDRVLMGLERKGVLVDEDERYATAVHEAGHVAVGLLAPSCDPVHKVSILPRGRALGVTQALPEKDRLMYRKEYLEDQICMLMGGRAAEMVVLGTMTAGASDDIQRASTIAWKMVAELGMSHLGPICVGDGHPSRSPALLDRVDETARALTEAQLSRAIEIVRSRRGEIEALVKALLEKETLGMDEIQACFPADRRPRPEDQAA.

Over 1-18 the chain is Cytoplasmic; it reads MNSWFLQVSKRLGPAGRR. A helical transmembrane segment spans residues 19–39; the sequence is LWLLGFMGVVLAVTLGLALRA. Residues 40–117 are Periplasmic-facing; that stretch reads ARESATQRTA…DFASREDPSR (78 aa). A helical membrane pass occupies residues 118–138; sequence AASAVLPVVVLAAVGFALFTV. Residues 139-602 lie on the Cytoplasmic side of the membrane; sequence SRRRSPKVFS…RRPRPEDQAA (464 aa). 202 to 209 is a binding site for ATP; sequence GEPGTGKT. His-425 contacts Zn(2+). Residue Glu-426 is part of the active site. Residues His-429 and Asp-501 each contribute to the Zn(2+) site.

It in the central section; belongs to the AAA ATPase family. The protein in the C-terminal section; belongs to the peptidase M41 family. In terms of assembly, homohexamer. Zn(2+) serves as cofactor.

The protein localises to the cell inner membrane. Functionally, acts as a processive, ATP-dependent zinc metallopeptidase for both cytoplasmic and membrane proteins. Plays a role in the quality control of integral membrane proteins. The sequence is that of ATP-dependent zinc metalloprotease FtsH 3 from Sorangium cellulosum (strain So ce56) (Polyangium cellulosum (strain So ce56)).